The following is a 254-amino-acid chain: Triosephosphate isomerase (254 aa).

Residue 12-14 coordinates substrate; it reads NWK. Histidine 99 serves as the catalytic Electrophile. Glutamate 169 serves as the catalytic Proton acceptor. Residues glycine 175, serine 214, and 235–236 each bind substrate; that span reads GG.

The protein belongs to the triosephosphate isomerase family. As to quaternary structure, homodimer.

It is found in the cytoplasm. The enzyme catalyses D-glyceraldehyde 3-phosphate = dihydroxyacetone phosphate. Its pathway is carbohydrate biosynthesis; gluconeogenesis. It participates in carbohydrate degradation; glycolysis; D-glyceraldehyde 3-phosphate from glycerone phosphate: step 1/1. Involved in the gluconeogenesis. Catalyzes stereospecifically the conversion of dihydroxyacetone phosphate (DHAP) to D-glyceraldehyde-3-phosphate (G3P). The chain is Triosephosphate isomerase from Bartonella henselae (strain ATCC 49882 / DSM 28221 / CCUG 30454 / Houston 1) (Rochalimaea henselae).